Here is a 149-residue protein sequence, read N- to C-terminus: MPTVRLFTCFLQLLTGLVLPAVPTTQWALSPGNISSEVEVVPFQQVWSRSYCRPVERLVDIVSEYPSEMEHLFSPSCVSLMRCTGCCSDESMHCVPLETANVTMQLMKYRSLDQPFFVEMSFSQHVRCECKPLWEKMKQTRCGDTISQR.

Residues 1 to 18 form the signal peptide; that stretch reads MPTVRLFTCFLQLLTGLV. N-linked (GlcNAc...) asparagine glycosylation is present at N33. Intrachain disulfides connect C52/C94, C83/C128, and C87/C130. A glycan (N-linked (GlcNAc...) asparagine) is linked at N101.

This sequence belongs to the PDGF/VEGF growth factor family. Antiparallel homodimer; disulfide-linked. Also found as heterodimer with VEGFA/VEGF.

The protein resides in the secreted. Its function is as follows. Growth factor active in angiogenesis and endothelial cell growth, stimulating their proliferation and migration. It binds to the receptor FLT1/VEGFR-1. Also promotes cell tumor growth. The sequence is that of Placenta growth factor (PGF) from Bos taurus (Bovine).